A 150-amino-acid chain; its full sequence is Protein E6 (150 aa).

Zinc fingers lie at residues 31 to 67 (CIWC…CAFC) and 104 to 140 (CALC…CTHC).

It belongs to the papillomaviridae E6 protein family. In terms of assembly, forms homodimers. Interacts with ubiquitin-protein ligase UBE3A/E6-AP; this interaction stimulates UBE3A ubiquitin activity. Interacts with host TP53 and EP300; this interaction inhibits TP53 activity.

The protein resides in the host cytoplasm. It localises to the host nucleus. Functionally, plays a major role in the induction and maintenance of cellular transformation. E6 associates with host UBE3A/E6-AP ubiquitin-protein ligase and modulates its activity. Sequesters tumor suppressor TP53 in the host cytoplasm and modulates its activity by interacting with host EP300 that results in the reduction of TP53 acetylation and activation. In turn, apoptosis induced by DNA damage is inhibited. E6 also protects host keratinocytes from apoptosis by mediating the degradation of host BAK1. May also inhibit host immune response. This chain is Protein E6, found in Homo sapiens (Human).